The chain runs to 366 residues: Septin-1 (366 aa).

Residues 22-295 (KGFDFTLMVA…EGYRARCLQS (274 aa)) form the Septin-type G domain. The segment at 32 to 39 (GESGLGKS) is G1 motif. GTP contacts are provided by residues 32–39 (GESGLGKS), threonine 66, glycine 92, and 171–179 (KADALMPRE). Residues 89 to 92 (DTPG) are G3 motif. The tract at residues 170 to 173 (GKAD) is G4 motif. Phosphoserine is present on serine 206. GTP contacts are provided by glycine 229 and arginine 244. Serine 247 bears the Phosphoserine mark. Threonine 250 carries the phosphothreonine modification. Serine 306 and serine 314 each carry phosphoserine; by AURKB. The tract at residues 347-366 (EKMQAQMQQSQAQGEQSDVL) is disordered. Over residues 349-366 (MQAQMQQSQAQGEQSDVL) the composition is skewed to low complexity.

Belongs to the TRAFAC class TrmE-Era-EngA-EngB-Septin-like GTPase superfamily. Septin GTPase family. In terms of assembly, septins polymerize into heterooligomeric protein complexes that form filaments, and can associate with cellular membranes, actin filaments and microtubules. GTPase activity is required for filament formation. Interacts with AURKB.

It is found in the cytoplasm. The protein resides in the cytoskeleton. The protein localises to the microtubule organizing center. It localises to the centrosome. Its subcellular location is the midbody. Functionally, filament-forming cytoskeletal GTPase. May play a role in cytokinesis (Potential). This chain is Septin-1, found in Mus musculus (Mouse).